Consider the following 97-residue polypeptide: RxLR effector protein PexRD21 (97 aa).

The first 21 residues, 1–21 (MRLSYILVVVIAVTLQACVCA), serve as a signal peptide directing secretion. The short motif at 48–66 (RLLRGVKKRTAEREVQEER) is the RxLR-dEER element.

Belongs to the RxLR effector family.

It is found in the secreted. The protein resides in the host cell membrane. Effector that is involved in host plant infection. Contributes to virulence during the early infection stage, by inhibiting plant defense responses induced by both PAMP-triggered immunity (PTI) and effector-triggered immunity (ETI). The protein is RxLR effector protein PexRD21 of Phytophthora infestans (strain T30-4) (Potato late blight agent).